The primary structure comprises 85 residues: UPF0297 protein Cbei_1105 (85 aa).

Belongs to the UPF0297 family.

This chain is UPF0297 protein Cbei_1105, found in Clostridium beijerinckii (strain ATCC 51743 / NCIMB 8052) (Clostridium acetobutylicum).